Reading from the N-terminus, the 445-residue chain is Ribosomal protein uS12 methylthiotransferase RimO (445 aa).

Positions Pro-11–Pro-121 constitute an MTTase N-terminal domain. Positions 20, 56, 85, 152, 156, and 159 each coordinate [4Fe-4S] cluster. The region spanning Leu-138–Arg-375 is the Radical SAM core domain. A TRAM domain is found at Lys-378 to Gly-444.

It belongs to the methylthiotransferase family. RimO subfamily. [4Fe-4S] cluster is required as a cofactor.

The protein resides in the cytoplasm. It carries out the reaction L-aspartate(89)-[ribosomal protein uS12]-hydrogen + (sulfur carrier)-SH + AH2 + 2 S-adenosyl-L-methionine = 3-methylsulfanyl-L-aspartate(89)-[ribosomal protein uS12]-hydrogen + (sulfur carrier)-H + 5'-deoxyadenosine + L-methionine + A + S-adenosyl-L-homocysteine + 2 H(+). In terms of biological role, catalyzes the methylthiolation of an aspartic acid residue of ribosomal protein uS12. This is Ribosomal protein uS12 methylthiotransferase RimO from Bradyrhizobium sp. (strain ORS 278).